We begin with the raw amino-acid sequence, 139 residues long: Large-conductance mechanosensitive channel (139 aa).

The next 2 membrane-spanning stretches (helical) occupy residues 14–34 (VIDLAVGVIVGAAFTAIINSL) and 81–101 (GSFLTAVINFLLIAFVVFMIV).

Belongs to the MscL family. In terms of assembly, homopentamer.

The protein localises to the cell membrane. Its function is as follows. Channel that opens in response to stretch forces in the membrane lipid bilayer. May participate in the regulation of osmotic pressure changes within the cell. This Chloroflexus aurantiacus (strain ATCC 29366 / DSM 635 / J-10-fl) protein is Large-conductance mechanosensitive channel.